The following is a 487-amino-acid chain: Argininosuccinate lyase (487 aa).

The protein belongs to the lyase 1 family. Argininosuccinate lyase subfamily.

Its subcellular location is the cytoplasm. The enzyme catalyses 2-(N(omega)-L-arginino)succinate = fumarate + L-arginine. The protein operates within amino-acid biosynthesis; L-arginine biosynthesis; L-arginine from L-ornithine and carbamoyl phosphate: step 3/3. The polypeptide is Argininosuccinate lyase (Methanococcus aeolicus (strain ATCC BAA-1280 / DSM 17508 / OCM 812 / Nankai-3)).